The chain runs to 437 residues: Trigger factor (437 aa).

Positions 161–246 (DDQVNIDFVG…VNSVSAPVLP (86 aa)) constitute a PPIase FKBP-type domain.

Belongs to the FKBP-type PPIase family. Tig subfamily.

It is found in the cytoplasm. The catalysed reaction is [protein]-peptidylproline (omega=180) = [protein]-peptidylproline (omega=0). Functionally, involved in protein export. Acts as a chaperone by maintaining the newly synthesized protein in an open conformation. Functions as a peptidyl-prolyl cis-trans isomerase. The protein is Trigger factor of Pseudomonas putida (strain ATCC 700007 / DSM 6899 / JCM 31910 / BCRC 17059 / LMG 24140 / F1).